Consider the following 375-residue polypeptide: tRNA-specific 2-thiouridylase MnmA (375 aa).

ATP is bound by residues 20–27 and Leu-46; that span reads AMSGGVDS. The active-site Nucleophile is Cys-114. Cysteines 114 and 211 form a disulfide. Residue Gly-138 participates in ATP binding. The tract at residues 160 to 162 is interaction with tRNA; that stretch reads RDQ. The Cysteine persulfide intermediate role is filled by Cys-211.

This sequence belongs to the MnmA/TRMU family.

The protein resides in the cytoplasm. It catalyses the reaction S-sulfanyl-L-cysteinyl-[protein] + uridine(34) in tRNA + AH2 + ATP = 2-thiouridine(34) in tRNA + L-cysteinyl-[protein] + A + AMP + diphosphate + H(+). Its function is as follows. Catalyzes the 2-thiolation of uridine at the wobble position (U34) of tRNA, leading to the formation of s(2)U34. The polypeptide is tRNA-specific 2-thiouridylase MnmA (Ruegeria pomeroyi (strain ATCC 700808 / DSM 15171 / DSS-3) (Silicibacter pomeroyi)).